We begin with the raw amino-acid sequence, 282 residues long: Transmembrane protein 41B (282 aa).

The segment at 1–36 (MAKKRAGNRETESSPLVEQEPRPSKETPVPKGAQSP) is disordered. 6 consecutive transmembrane segments (helical) span residues 43-63 (MSIL…YLVF), 102-122 (TQVL…AIPG), 138-160 (LALF…LSYL), 188-208 (LINY…FINI), 216-236 (PLGV…FVAI), and 251-271 (AVSW…ILPV). The tract at residues 131–242 (GYLYPFPLAL…FVAINAGTTL (112 aa)) is VTT domain; required for its function in autophagy.

The protein belongs to the TMEM41 family.

It is found in the endoplasmic reticulum membrane. It localises to the endomembrane system. It catalyses the reaction a 1,2-diacyl-sn-glycero-3-phospho-L-serine(in) = a 1,2-diacyl-sn-glycero-3-phospho-L-serine(out). The catalysed reaction is cholesterol(in) = cholesterol(out). It carries out the reaction a 1,2-diacyl-sn-glycero-3-phosphocholine(in) = a 1,2-diacyl-sn-glycero-3-phosphocholine(out). The enzyme catalyses a 1,2-diacyl-sn-glycero-3-phosphoethanolamine(in) = a 1,2-diacyl-sn-glycero-3-phosphoethanolamine(out). Phospholipid scramblase involved in lipid homeostasis and membrane dynamics processes. Has phospholipid scramblase activity toward cholesterol and phosphatidylserine, as well as phosphatidylethanolamine and phosphatidylcholine. Required for autophagosome formation: participates in early stages of autophagosome biogenesis at the endoplasmic reticulum (ER) membrane by reequilibrating the leaflets of the ER as lipids are extracted by atg2 (atg2a or atg2b) to mediate autophagosome assembly. In addition to autophagy, involved in other processes in which phospholipid scramblase activity is required. Required for normal motor neuron development. This chain is Transmembrane protein 41B, found in Danio rerio (Zebrafish).